The following is a 249-amino-acid chain: Triosephosphate isomerase (249 aa).

12 to 14 (NWK) contacts substrate. His-96 acts as the Electrophile in catalysis. Residue Glu-166 is the Proton acceptor of the active site. Substrate-binding positions include Gly-172, Ser-211, and 232–233 (GG).

The protein belongs to the triosephosphate isomerase family. Homodimer.

The protein localises to the cytoplasm. The catalysed reaction is D-glyceraldehyde 3-phosphate = dihydroxyacetone phosphate. Its pathway is carbohydrate biosynthesis; gluconeogenesis. It functions in the pathway carbohydrate degradation; glycolysis; D-glyceraldehyde 3-phosphate from glycerone phosphate: step 1/1. Involved in the gluconeogenesis. Catalyzes stereospecifically the conversion of dihydroxyacetone phosphate (DHAP) to D-glyceraldehyde-3-phosphate (G3P). The protein is Triosephosphate isomerase of Xanthobacter flavus.